The following is a 498-amino-acid chain: Capsanthin/capsorubin synthase, chromoplastic (498 aa).

The transit peptide at 1–52 (METLLKPFPSPLLSIPTPNMYSFKHNSTFPNPTKQKDSRKFHYRNKSSTHFC) directs the protein to the chromoplast. Residue 84–112 (VIIIGTGPAGLRLAEQVSKYGIKVCCVDP) coordinates NAD(+). Positions 293 to 297 (FLEET) match the FLEET motif motif.

The protein belongs to the lycopene cyclase family. In terms of assembly, monomer. The cofactor is FAD. NADPH serves as cofactor.

The protein resides in the plastid. The protein localises to the chromoplast. It catalyses the reaction all-trans-violaxanthin = all-trans-capsorubin. The catalysed reaction is all-trans-antheraxanthin = all-trans-capsanthin. It carries out the reaction all-trans-violaxanthin = (5R,6S)-5,6-epoxi-capsanthin. The enzyme catalyses (5R,6S)-5,6-epoxi-capsanthin = all-trans-capsorubin. It functions in the pathway carotenoid biosynthesis; capsanthin biosynthesis; capsanthin from antheraxanthin: step 1/1. It participates in carotenoid biosynthesis; capsorubin biosynthesis; capsorubin from violaxanthin: step 1/1. Catalyzes the conversion of the ubiquitous 5,6-epoxycarotenoids, antheraxanthin and violaxanthin, into capsanthin and capsorubin, respectively. The polypeptide is Capsanthin/capsorubin synthase, chromoplastic (Capsicum annuum (Capsicum pepper)).